The following is a 581-amino-acid chain: Tetratricopeptide repeat and J domain-containing co-chaperone DNJ1 (581 aa).

The signal sequence occupies residues 1 to 19 (MKATLLPSLLALSLTLCLA). TPR repeat units follow at residues 48–81 (ASQH…DPSS), 82–115 (WLTY…NPKF), 116–149 (DKAY…RAEK), 221–254 (LETR…TPSP), 257–293 (LRRL…DPDN), 378–411 (LELH…DPDN), and 412–445 (VEAT…SGRT). Asn293 carries an N-linked (GlcNAc...) asparagine glycan. Residues 467–528 (DYYKVLGVKR…ELRKKYDQGD (62 aa)) form the J domain. Residues 522–544 (KKYDQGDDPNDPMGGQQGGYGNP) are disordered.

In terms of assembly, interacts with the ER chaperone BIP1.

It localises to the endoplasmic reticulum lumen. Its function is as follows. Endoplasmic reticulum (ER) protein that functions as a co-chaperone for BIP1 during ER stress. Might be specifically involved in the refolding of N-glycosylated proteins. This Mycosarcoma maydis (Corn smut fungus) protein is Tetratricopeptide repeat and J domain-containing co-chaperone DNJ1.